The primary structure comprises 304 residues: Aspartate carbamoyltransferase catalytic subunit (304 aa).

Carbamoyl phosphate contacts are provided by Arg-53 and Thr-54. Lys-82 is an L-aspartate binding site. Carbamoyl phosphate is bound by residues Arg-103, His-131, and Gln-134. Positions 163 and 224 each coordinate L-aspartate. Residues Leu-263 and Pro-264 each contribute to the carbamoyl phosphate site.

The protein belongs to the aspartate/ornithine carbamoyltransferase superfamily. ATCase family. As to quaternary structure, heterooligomer of catalytic and regulatory chains.

It catalyses the reaction carbamoyl phosphate + L-aspartate = N-carbamoyl-L-aspartate + phosphate + H(+). Its pathway is pyrimidine metabolism; UMP biosynthesis via de novo pathway; (S)-dihydroorotate from bicarbonate: step 2/3. Functionally, catalyzes the condensation of carbamoyl phosphate and aspartate to form carbamoyl aspartate and inorganic phosphate, the committed step in the de novo pyrimidine nucleotide biosynthesis pathway. The chain is Aspartate carbamoyltransferase catalytic subunit from Haloquadratum walsbyi (strain DSM 16790 / HBSQ001).